The sequence spans 370 residues: Anthranilate phosphoribosyltransferase (370 aa).

5-phospho-alpha-D-ribose 1-diphosphate-binding positions include glycine 82, 85 to 86, threonine 90, 92 to 95, 110 to 118, and serine 122; these read GD, NVST, and KHGNRAATS. Glycine 82 contributes to the anthranilate binding site. Serine 94 contributes to the Mg(2+) binding site. Anthranilate is bound at residue asparagine 113. Residue arginine 168 participates in anthranilate binding. Aspartate 226 and glutamate 227 together coordinate Mg(2+).

Belongs to the anthranilate phosphoribosyltransferase family. In terms of assembly, homodimer. Mg(2+) serves as cofactor.

It catalyses the reaction N-(5-phospho-beta-D-ribosyl)anthranilate + diphosphate = 5-phospho-alpha-D-ribose 1-diphosphate + anthranilate. Its pathway is amino-acid biosynthesis; L-tryptophan biosynthesis; L-tryptophan from chorismate: step 2/5. Catalyzes the transfer of the phosphoribosyl group of 5-phosphorylribose-1-pyrophosphate (PRPP) to anthranilate to yield N-(5'-phosphoribosyl)-anthranilate (PRA). The sequence is that of Anthranilate phosphoribosyltransferase from Methanosarcina acetivorans (strain ATCC 35395 / DSM 2834 / JCM 12185 / C2A).